The following is a 581-amino-acid chain: Guanine nucleotide-binding protein-like 3 homolog (581 aa).

Over residues 1–49 the composition is skewed to basic residues; that stretch reads MALKRLKTKKSKRLTGRLKHKIEKKVRDHNKKERRAAKKNPKKGSKKQK. Positions 1–50 are disordered; the sequence is MALKRLKTKKSKRLTGRLKHKIEKKVRDHNKKERRAAKKNPKKGSKKQKL. Residues 64 to 108 adopt a coiled-coil conformation; sequence LKEVEEAKQRQEAERLARREAFKAEREQNKFKTLESMVEDADMRS. The residue at position 99 (S99) is a Phosphoserine. The 185-residue stretch at 141 to 325 folds into the CP-type G domain; the sequence is FKEFRKVIEN…LIDCPGIVFT (185 aa). Residues 189–192, 274–281, and 318–321 contribute to the GTP site; these read NKAD, GIPNVGKS, and DCPG. The segment covering 500–517 has biased composition (basic and acidic residues); the sequence is KPAKGRKRKLDEEKEKVD. Residues 500–519 are disordered; it reads KPAKGRKRKLDEEKEKVDPS.

Belongs to the TRAFAC class YlqF/YawG GTPase family.

It is found in the nucleus. It localises to the nucleolus. Its function is as follows. May play a role in regulating cellular proliferation. The polypeptide is Guanine nucleotide-binding protein-like 3 homolog (Ns1) (Drosophila melanogaster (Fruit fly)).